The sequence spans 471 residues: Cysteine--tRNA ligase (471 aa).

Cysteine 29 contacts Zn(2+). Positions 31-41 match the 'HIGH' region motif; the sequence is LTVQSEPHVGH. Zn(2+) is bound by residues cysteine 215, histidine 240, and glutamate 244. A 'KMSKS' region motif is present at residues 271 to 275; it reads KMSKS. Position 274 (lysine 274) interacts with ATP.

It belongs to the class-I aminoacyl-tRNA synthetase family. In terms of assembly, monomer. The cofactor is Zn(2+).

The protein localises to the cytoplasm. The catalysed reaction is tRNA(Cys) + L-cysteine + ATP = L-cysteinyl-tRNA(Cys) + AMP + diphosphate. This is Cysteine--tRNA ligase from Nocardioides sp. (strain ATCC BAA-499 / JS614).